A 260-amino-acid chain; its full sequence is Cytochrome c oxidase subunit 3 (260 aa).

7 helical membrane-spanning segments follow: residues 14 to 34 (PWPL…ILWF), 41 to 61 (LLLA…RDVI), 81 to 101 (GMIL…WAFF), 126 to 146 (FLVP…VTWA), 158 to 178 (AIQG…LQAW), 196 to 216 (FFVA…FLFI), and 238 to 258 (AWYW…ICWW).

It belongs to the cytochrome c oxidase subunit 3 family. In terms of assembly, component of the cytochrome c oxidase (complex IV, CIV), a multisubunit enzyme composed of a catalytic core of 3 subunits and several supernumerary subunits. The complex exists as a monomer or a dimer and forms supercomplexes (SCs) in the inner mitochondrial membrane with ubiquinol-cytochrome c oxidoreductase (cytochrome b-c1 complex, complex III, CIII).

It is found in the mitochondrion inner membrane. It catalyses the reaction 4 Fe(II)-[cytochrome c] + O2 + 8 H(+)(in) = 4 Fe(III)-[cytochrome c] + 2 H2O + 4 H(+)(out). Functionally, component of the cytochrome c oxidase, the last enzyme in the mitochondrial electron transport chain which drives oxidative phosphorylation. The respiratory chain contains 3 multisubunit complexes succinate dehydrogenase (complex II, CII), ubiquinol-cytochrome c oxidoreductase (cytochrome b-c1 complex, complex III, CIII) and cytochrome c oxidase (complex IV, CIV), that cooperate to transfer electrons derived from NADH and succinate to molecular oxygen, creating an electrochemical gradient over the inner membrane that drives transmembrane transport and the ATP synthase. Cytochrome c oxidase is the component of the respiratory chain that catalyzes the reduction of oxygen to water. Electrons originating from reduced cytochrome c in the intermembrane space (IMS) are transferred via the dinuclear copper A center (CU(A)) of subunit 2 and heme A of subunit 1 to the active site in subunit 1, a binuclear center (BNC) formed by heme A3 and copper B (CU(B)). The BNC reduces molecular oxygen to 2 water molecules using 4 electrons from cytochrome c in the IMS and 4 protons from the mitochondrial matrix. The sequence is that of Cytochrome c oxidase subunit 3 (COIII) from Patiria pectinifera (Starfish).